The sequence spans 147 residues: Mediator of RNA polymerase II transcription subunit 10 (147 aa).

Belongs to the Mediator complex subunit 10 family. Component of the Mediator complex.

It is found in the nucleus. In terms of biological role, component of the Mediator complex, a coactivator involved in the regulated transcription of nearly all RNA polymerase II-dependent genes. Mediator functions as a bridge to convey information from gene-specific regulatory proteins to the basal RNA polymerase II transcription machinery. Mediator is recruited to promoters by direct interactions with regulatory proteins and serves as a scaffold for the assembly of a functional preinitiation complex with RNA polymerase II and the general transcription factors. The sequence is that of Mediator of RNA polymerase II transcription subunit 10 (NUT2) from Debaryomyces hansenii (strain ATCC 36239 / CBS 767 / BCRC 21394 / JCM 1990 / NBRC 0083 / IGC 2968) (Yeast).